Consider the following 101-residue polypeptide: Signal recognition particle 19 kDa protein (101 aa).

This sequence belongs to the SRP19 family. As to quaternary structure, part of the signal recognition particle protein translocation system, which is composed of SRP and FtsY. Archaeal SRP consists of a 7S RNA molecule of 300 nucleotides and two protein subunits: SRP54 and SRP19.

It is found in the cytoplasm. Involved in targeting and insertion of nascent membrane proteins into the cytoplasmic membrane. Binds directly to 7S RNA and mediates binding of the 54 kDa subunit of the SRP. This is Signal recognition particle 19 kDa protein from Thermofilum pendens (strain DSM 2475 / Hrk 5).